A 577-amino-acid chain; its full sequence is Acyl-coenzyme A synthetase ACSM2A, mitochondrial (577 aa).

The transit peptide at 1–46 directs the protein to the mitochondrion; sequence MHWLRKVQGLCTLWGTQMSSRTLYINSRQLVSLQWGHQEVPAKFNF. Gln139 is a CoA binding site. Residues 221-229, 359-364, Asp446, and Arg461 each bind ATP; these read TSGTSGLPK and ESYGQT. Thr364 contacts substrate. 469 to 471 contributes to the CoA binding site; it reads SGY. Residue Arg472 participates in substrate binding. Arg501 provides a ligand contact to CoA. Ser513 bears the Phosphoserine mark. Residues Lys532 and 540-542 contribute to the CoA site; that span reads YPR. An ATP-binding site is contributed by Lys557.

It belongs to the ATP-dependent AMP-binding enzyme family. Monomer. It depends on Mg(2+) as a cofactor. The cofactor is Mn(2+).

The protein localises to the mitochondrion. It carries out the reaction a medium-chain fatty acid + ATP + CoA = a medium-chain fatty acyl-CoA + AMP + diphosphate. It catalyses the reaction benzoate + ATP + CoA = benzoyl-CoA + AMP + diphosphate. The enzyme catalyses hexanoate + ATP + CoA = hexanoyl-CoA + AMP + diphosphate. The catalysed reaction is butanoate + ATP + CoA = butanoyl-CoA + AMP + diphosphate. It carries out the reaction octanoate + ATP + CoA = octanoyl-CoA + AMP + diphosphate. It catalyses the reaction decanoate + ATP + CoA = decanoyl-CoA + AMP + diphosphate. Catalyzes the activation of fatty acids by CoA to produce an acyl-CoA, the first step in fatty acid metabolism. Capable of activating medium-chain fatty acids (e.g. butyric (C4) to decanoic (C10) acids), and certain carboxylate-containing xenobiotics, e.g. benzoate. This Homo sapiens (Human) protein is Acyl-coenzyme A synthetase ACSM2A, mitochondrial (ACSM2A).